We begin with the raw amino-acid sequence, 303 residues long: Probable porphobilinogen deaminase (303 aa).

S-(dipyrrolylmethanemethyl)cysteine is present on cysteine 233.

This sequence belongs to the HMBS family. The cofactor is dipyrromethane.

It catalyses the reaction 4 porphobilinogen + H2O = hydroxymethylbilane + 4 NH4(+). The protein operates within porphyrin-containing compound metabolism; protoporphyrin-IX biosynthesis; coproporphyrinogen-III from 5-aminolevulinate: step 2/4. In terms of biological role, tetrapolymerization of the monopyrrole PBG into the hydroxymethylbilane pre-uroporphyrinogen in several discrete steps. In Methanocella arvoryzae (strain DSM 22066 / NBRC 105507 / MRE50), this protein is Probable porphobilinogen deaminase.